A 449-amino-acid chain; its full sequence is Chromosomal replication initiator protein DnaA (449 aa).

A domain I, interacts with DnaA modulators region spans residues 1–73; the sequence is MTQNPQWLWQ…TETIAELLQQ (73 aa). The interval 73 to 109 is domain II; it reads QPVKVRLTSPEGNTLAATQSFYSSRSGQSTRPGKKTP. Over residues 90–103 the composition is skewed to polar residues; the sequence is TQSFYSSRSGQSTR. Residues 90–110 form a disordered region; that stretch reads TQSFYSSRSGQSTRPGKKTPE. Residues 110-326 form a domain III, AAA+ region region; it reads ELNSKYTFSR…GALLRAVTHI (217 aa). Positions 154, 156, 157, and 158 each coordinate ATP. Positions 327-449 are domain IV, binds dsDNA; sequence AISGLPMTVE…DRINHHHQNL (123 aa).

It belongs to the DnaA family. Oligomerizes as a right-handed, spiral filament on DNA at oriC.

It is found in the cytoplasm. Plays an essential role in the initiation and regulation of chromosomal replication. ATP-DnaA binds to the origin of replication (oriC) to initiate formation of the DNA replication initiation complex once per cell cycle. Binds the DnaA box (a 9 base pair repeat at the origin) and separates the double-stranded (ds)DNA. Forms a right-handed helical filament on oriC DNA; dsDNA binds to the exterior of the filament while single-stranded (ss)DNA is stabiized in the filament's interior. The ATP-DnaA-oriC complex binds and stabilizes one strand of the AT-rich DNA unwinding element (DUE), permitting loading of DNA polymerase. After initiation quickly degrades to an ADP-DnaA complex that is not apt for DNA replication. Binds acidic phospholipids. This is Chromosomal replication initiator protein DnaA from Picosynechococcus sp. (strain ATCC 27264 / PCC 7002 / PR-6) (Agmenellum quadruplicatum).